The sequence spans 273 residues: MRKIAIYGKGGIGKSTTTQNTVAGLVEAGHKIMVVGCDPKADSTRLLLNGLAQKTVLDTLREEGEDVVLEDVLKLGYGGTMCTESGGPEPGVGCAGRGIITSINLLEQLGAYENEELDYVFYDVLGDVVCGGFAMPMREGKAQEIYIVVSGEMMAMYAANNICKGIVKFAESGGIRLGGLICNSRAVDFEKDMIEALAEKLGTQMIHFIPRENVVQRAEINRKTVIEYEPEHSQADEYRMLAKKINENEKYVIPTPIEIEELEELLVTYGIAS.

8–15 (GKGGIGKS) provides a ligand contact to ATP. A [4Fe-4S] cluster-binding site is contributed by C94. At R97 the chain carries ADP-ribosylarginine; by dinitrogenase reductase ADP-ribosyltransferase. C130 contributes to the [4Fe-4S] cluster binding site.

Belongs to the NifH/BchL/ChlL family. Homodimer. It depends on [4Fe-4S] cluster as a cofactor. Post-translationally, the reversible ADP-ribosylation of Arg-97 inactivates the nitrogenase reductase and regulates nitrogenase activity.

The catalysed reaction is N2 + 8 reduced [2Fe-2S]-[ferredoxin] + 16 ATP + 16 H2O = H2 + 8 oxidized [2Fe-2S]-[ferredoxin] + 2 NH4(+) + 16 ADP + 16 phosphate + 6 H(+). In terms of biological role, the key enzymatic reactions in nitrogen fixation are catalyzed by the nitrogenase complex, which has 2 components: the iron protein and the molybdenum-iron protein. This Desulforapulum autotrophicum (strain ATCC 43914 / DSM 3382 / VKM B-1955 / HRM2) (Desulfobacterium autotrophicum) protein is Nitrogenase iron protein.